The chain runs to 65 residues: Ferredoxin-1 (65 aa).

The region spanning 3-31 is the 4Fe-4S ferredoxin-type domain; the sequence is RKFYVDQDECIACESCVEIAPGAFAMDPE. Residues Cys-12, Cys-15, Cys-18, and Cys-55 each contribute to the [4Fe-4S] cluster site.

Homodimer. [4Fe-4S] cluster is required as a cofactor.

In terms of biological role, ferredoxins are iron-sulfur proteins that transfer electrons in a wide variety of metabolic reactions. The protein is Ferredoxin-1 (fd1) of Desulfocurvibacter africanus (Desulfovibrio africanus).